We begin with the raw amino-acid sequence, 249 residues long: Ribonuclease PH (249 aa).

Residues Arg-90 and 128-130 contribute to the phosphate site; that span reads GTR.

This sequence belongs to the RNase PH family. As to quaternary structure, homohexameric ring arranged as a trimer of dimers.

It carries out the reaction tRNA(n+1) + phosphate = tRNA(n) + a ribonucleoside 5'-diphosphate. Its function is as follows. Phosphorolytic 3'-5' exoribonuclease that plays an important role in tRNA 3'-end maturation. Removes nucleotide residues following the 3'-CCA terminus of tRNAs; can also add nucleotides to the ends of RNA molecules by using nucleoside diphosphates as substrates, but this may not be physiologically important. Probably plays a role in initiation of 16S rRNA degradation (leading to ribosome degradation) during starvation. The chain is Ribonuclease PH from Parasynechococcus marenigrum (strain WH8102).